The primary structure comprises 314 residues: Palmitoyl-protein thioesterase 1 (314 aa).

Positions 1–25 (MISICCSRFSCILFLLFLIFSLVLS) are cleaved as a signal peptide. 3 disulfide bridges follow: C53–C54, C104–C136, and C160–C168. The Nucleophile role is filled by S123. N240 carries an N-linked (GlcNAc...) asparagine glycan. Active-site residues include D241 and H295.

Belongs to the palmitoyl-protein thioesterase family. In terms of tissue distribution, ubiquitously expressed.

The protein localises to the lysosome. It carries out the reaction S-hexadecanoyl-L-cysteinyl-[protein] + H2O = L-cysteinyl-[protein] + hexadecanoate + H(+). Cleaves thioester-linked long fatty acyl groups such as palmitate from modified cysteine residues in proteins or peptides. This Drosophila melanogaster (Fruit fly) protein is Palmitoyl-protein thioesterase 1 (Ppt1).